The following is a 436-amino-acid chain: ATP-dependent RNA helicase RhlB (436 aa).

The Q motif motif lies at 9-37; it reads QKFADLDLLPQVIEGLEKKGFDYCTPIQA. Residues 40-219 enclose the Helicase ATP-binding domain; that stretch reads LPVLLTGQDI…FEHMHNPEHV (180 aa). Position 53 to 60 (53 to 60) interacts with ATP; it reads AQTGTGKT. Positions 165–168 match the DEAD box motif; that stretch reads DEAD. Residues 245-390 form the Helicase C-terminal domain; that stretch reads ALLQTLIEEE…MSDYDASALL (146 aa). Residues 398 to 436 form a disordered region; it reads RLRTRNPQQRRSNNNGPRNGNRKPNQNRRPRQPRHNKEA. The segment covering 402 to 421 has biased composition (low complexity); the sequence is RNPQQRRSNNNGPRNGNRKP. Over residues 422–436 the composition is skewed to basic residues; it reads NQNRRPRQPRHNKEA.

This sequence belongs to the DEAD box helicase family. RhlB subfamily. Component of the RNA degradosome, which is a multiprotein complex involved in RNA processing and mRNA degradation.

It is found in the cytoplasm. It carries out the reaction ATP + H2O = ADP + phosphate + H(+). DEAD-box RNA helicase involved in RNA degradation. Has RNA-dependent ATPase activity and unwinds double-stranded RNA. The chain is ATP-dependent RNA helicase RhlB from Vibrio atlanticus (strain LGP32) (Vibrio splendidus (strain Mel32)).